Consider the following 347-residue polypeptide: NADH-ubiquinone oxidoreductase chain 2 (347 aa).

10 consecutive transmembrane segments (helical) span residues 13–33, 59–79, 84–104, 111–131, 149–169, 178–198, 201–221, 240–260, 276–296, and 326–346; these read IILG…WIGF, YFLI…INLL, WAVS…ALAM, FHFW…LILL, IDPT…GWGG, IMAY…IYNP, TILN…LLII, IAII…LTGF, IALS…YTRL, and LSPL…MSAL.

It belongs to the complex I subunit 2 family. Core subunit of respiratory chain NADH dehydrogenase (Complex I) which is composed of 45 different subunits. Interacts with TMEM242.

It is found in the mitochondrion inner membrane. It catalyses the reaction a ubiquinone + NADH + 5 H(+)(in) = a ubiquinol + NAD(+) + 4 H(+)(out). Functionally, core subunit of the mitochondrial membrane respiratory chain NADH dehydrogenase (Complex I) that is believed to belong to the minimal assembly required for catalysis. Complex I functions in the transfer of electrons from NADH to the respiratory chain. The immediate electron acceptor for the enzyme is believed to be ubiquinone. This chain is NADH-ubiquinone oxidoreductase chain 2, found in Chrotopterus auritus (Peters's woolly false vampire bat).